Consider the following 314-residue polypeptide: ATP synthase gamma chain (314 aa).

It belongs to the ATPase gamma chain family. F-type ATPases have 2 components, CF(1) - the catalytic core - and CF(0) - the membrane proton channel. CF(1) has five subunits: alpha(3), beta(3), gamma(1), delta(1), epsilon(1). CF(0) has three main subunits: a, b and c.

The protein localises to the cell membrane. Produces ATP from ADP in the presence of a proton gradient across the membrane. The gamma chain is believed to be important in regulating ATPase activity and the flow of protons through the CF(0) complex. This chain is ATP synthase gamma chain, found in Cutibacterium acnes (strain DSM 16379 / KPA171202) (Propionibacterium acnes).